The primary structure comprises 159 residues: Cytochrome b6-f complex subunit 4 (159 aa).

3 helical membrane-spanning segments follow: residues 35–55, 93–113, and 127–147; these read ILIF…LAVL, LLGV…PFIE, and ATAV…GAMI.

This sequence belongs to the cytochrome b family. PetD subfamily. As to quaternary structure, the 4 large subunits of the cytochrome b6-f complex are cytochrome b6, subunit IV (17 kDa polypeptide, PetD), cytochrome f and the Rieske protein, while the 4 small subunits are PetG, PetL, PetM and PetN. The complex functions as a dimer.

It localises to the cell inner membrane. Its function is as follows. Component of the cytochrome b6-f complex, which mediates electron transfer between photosystem II (PSII) and photosystem I (PSI), cyclic electron flow around PSI, and state transitions. The protein is Cytochrome b6-f complex subunit 4 of Gloeobacter violaceus (strain ATCC 29082 / PCC 7421).